A 150-amino-acid polypeptide reads, in one-letter code: Transcriptional repressor NrdR (150 aa).

Residues 3–33 fold into a zinc finger; it reads CPYCTGESAVIDTRELDNGETIRRRRRCKHC. An ATP-cone domain is found at 48–138; that stretch reads VMVVKKNGDR…VYRSFSDLGK (91 aa).

The protein belongs to the NrdR family. Requires Zn(2+) as cofactor.

Its function is as follows. Negatively regulates transcription of bacterial ribonucleotide reductase nrd genes and operons by binding to NrdR-boxes. This is Transcriptional repressor NrdR from Herpetosiphon aurantiacus (strain ATCC 23779 / DSM 785 / 114-95).